The following is a 297-amino-acid chain: uncharacterized protein (297 aa).

The protein belongs to the glycosyltransferase 2 family.

This is an uncharacterized protein from Mycoplasma genitalium (strain ATCC 33530 / DSM 19775 / NCTC 10195 / G37) (Mycoplasmoides genitalium).